The primary structure comprises 1481 residues: DNA-directed RNA polymerase subunit beta'' (1481 aa).

Residues cysteine 217, cysteine 291, cysteine 298, and cysteine 301 each coordinate Zn(2+).

Belongs to the RNA polymerase beta' chain family. RpoC2 subfamily. In terms of assembly, in plastids the minimal PEP RNA polymerase catalytic core is composed of four subunits: alpha, beta, beta', and beta''. When a (nuclear-encoded) sigma factor is associated with the core the holoenzyme is formed, which can initiate transcription. Requires Zn(2+) as cofactor.

Its subcellular location is the plastid. It is found in the chloroplast. The catalysed reaction is RNA(n) + a ribonucleoside 5'-triphosphate = RNA(n+1) + diphosphate. DNA-dependent RNA polymerase catalyzes the transcription of DNA into RNA using the four ribonucleoside triphosphates as substrates. In Trieres chinensis (Marine centric diatom), this protein is DNA-directed RNA polymerase subunit beta''.